A 154-amino-acid polypeptide reads, in one-letter code: Large ribosomal subunit protein uL23z (154 aa).

The protein belongs to the universal ribosomal protein uL23 family.

Its function is as follows. Binds to a specific region on the 26S rRNA. This Arabidopsis thaliana (Mouse-ear cress) protein is Large ribosomal subunit protein uL23z (RPL23AA).